The primary structure comprises 89 residues: Small ribosomal subunit protein bS20 (89 aa).

Belongs to the bacterial ribosomal protein bS20 family.

Binds directly to 16S ribosomal RNA. The polypeptide is Small ribosomal subunit protein bS20 (Helicobacter pylori (strain P12)).